A 673-amino-acid polypeptide reads, in one-letter code: DNA topoisomerase 1 (673 aa).

Residues 1–134 (MVAEKPKAAA…ARRMKFSTLA (134 aa)) enclose the Toprim domain. Mg(2+) is bound by residues Glu4 and Asp103. Residues 149 to 568 (DVEMIEAGMA…MSKKTISKLL (420 aa)) enclose the Topo IA-type catalytic domain. An interaction with DNA region spans residues 189–194 (SAGRVQ). Residue Tyr311 is the O-(5'-phospho-DNA)-tyrosine intermediate of the active site. The segment at 352 to 374 (LRPVQGSKDDPAHPAIHPTGEKP) is disordered. The C4-type zinc finger occupies 595–615 (CHLCGRKAVSAVSGYRLCSHH).

The protein belongs to the type IA topoisomerase family. As to quaternary structure, monomer. Mg(2+) serves as cofactor.

It catalyses the reaction ATP-independent breakage of single-stranded DNA, followed by passage and rejoining.. Functionally, releases the supercoiling and torsional tension of DNA, which is introduced during the DNA replication and transcription, by transiently cleaving and rejoining one strand of the DNA duplex. Introduces a single-strand break via transesterification at a target site in duplex DNA. The scissile phosphodiester is attacked by the catalytic tyrosine of the enzyme, resulting in the formation of a DNA-(5'-phosphotyrosyl)-enzyme intermediate and the expulsion of a 3'-OH DNA strand. The free DNA strand then undergoes passage around the unbroken strand, thus removing DNA supercoils. Finally, in the religation step, the DNA 3'-OH attacks the covalent intermediate to expel the active-site tyrosine and restore the DNA phosphodiester backbone. The sequence is that of DNA topoisomerase 1 from Aeropyrum pernix (strain ATCC 700893 / DSM 11879 / JCM 9820 / NBRC 100138 / K1).